Consider the following 408-residue polypeptide: GPI transamidase component GAB1 homolog (408 aa).

Helical transmembrane passes span 9–29, 66–86, 88–108, 125–145, 149–169, 207–227, 266–286, 303–323, 339–359, and 370–390; these read LLGL…TWIA, VFYQ…LGGI, VTRF…YLIA, PLWI…GIAC, MILN…SYAI, IFVV…FFLN, FFLF…SIRL, LFKA…LPIF, AIVF…TLGC, and LILA…LLLV. The tract at residues 247–267 is may be involved in recognition of long-chain fatty acids in GPI; that stretch reads PNLGLWWYFFTEMFNEFRTFF.

This sequence belongs to the PIGU family. Forms a complex with PIG-S homolog, PIG-T homolog and GPI8.

It is found in the endoplasmic reticulum membrane. It functions in the pathway glycolipid biosynthesis; glycosylphosphatidylinositol-anchor biosynthesis. In terms of biological role, component of the GPI transamidase complex. May be involved in the recognition of either the GPI attachment signal or the lipid portion of GPI. The sequence is that of GPI transamidase component GAB1 homolog from Schizosaccharomyces pombe (strain 972 / ATCC 24843) (Fission yeast).